The primary structure comprises 320 residues: Glucokinase (320 aa).

12-17 (GDIGGT) lines the ATP pocket.

This sequence belongs to the bacterial glucokinase family.

It is found in the cytoplasm. It carries out the reaction D-glucose + ATP = D-glucose 6-phosphate + ADP + H(+). The polypeptide is Glucokinase (Nitrobacter hamburgensis (strain DSM 10229 / NCIMB 13809 / X14)).